The following is a 220-amino-acid chain: Large ribosomal subunit protein uL16 (220 aa).

This sequence belongs to the universal ribosomal protein uL16 family. Component of the small ribosomal subunit. Mature ribosomes consist of a small (40S) and a large (60S) subunit. The 40S subunit contains about 33 different proteins and 1 molecule of RNA (18S). The 60S subunit contains about 49 different proteins and 3 molecules of RNA (25S, 5.8S and 5S).

This chain is Large ribosomal subunit protein uL16 (RPL10), found in Euphorbia esula (Leafy spurge).